The primary structure comprises 319 residues: Methionyl-tRNA formyltransferase (319 aa).

A (6S)-5,6,7,8-tetrahydrofolate-binding site is contributed by 113–116; it reads SLLP.

This sequence belongs to the Fmt family.

It carries out the reaction L-methionyl-tRNA(fMet) + (6R)-10-formyltetrahydrofolate = N-formyl-L-methionyl-tRNA(fMet) + (6S)-5,6,7,8-tetrahydrofolate + H(+). Its function is as follows. Attaches a formyl group to the free amino group of methionyl-tRNA(fMet). The formyl group appears to play a dual role in the initiator identity of N-formylmethionyl-tRNA by promoting its recognition by IF2 and preventing the misappropriation of this tRNA by the elongation apparatus. This Hamiltonella defensa subsp. Acyrthosiphon pisum (strain 5AT) protein is Methionyl-tRNA formyltransferase.